Reading from the N-terminus, the 244-residue chain is 5-oxoprolinase subunit A (244 aa).

Belongs to the LamB/PxpA family. Forms a complex composed of PxpA, PxpB and PxpC.

It catalyses the reaction 5-oxo-L-proline + ATP + 2 H2O = L-glutamate + ADP + phosphate + H(+). Its function is as follows. Catalyzes the cleavage of 5-oxoproline to form L-glutamate coupled to the hydrolysis of ATP to ADP and inorganic phosphate. This is 5-oxoprolinase subunit A from Escherichia coli O7:K1 (strain IAI39 / ExPEC).